A 364-amino-acid chain; its full sequence is UDP-N-acetylglucosamine--N-acetylmuramyl-(pentapeptide) pyrophosphoryl-undecaprenol N-acetylglucosamine transferase (364 aa).

UDP-N-acetyl-alpha-D-glucosamine-binding positions include 19–21, Asn-131, Arg-167, Ser-195, Ile-250, and Gln-295; that span reads TGG.

The protein belongs to the glycosyltransferase 28 family. MurG subfamily.

Its subcellular location is the cell inner membrane. It catalyses the reaction di-trans,octa-cis-undecaprenyl diphospho-N-acetyl-alpha-D-muramoyl-L-alanyl-D-glutamyl-meso-2,6-diaminopimeloyl-D-alanyl-D-alanine + UDP-N-acetyl-alpha-D-glucosamine = di-trans,octa-cis-undecaprenyl diphospho-[N-acetyl-alpha-D-glucosaminyl-(1-&gt;4)]-N-acetyl-alpha-D-muramoyl-L-alanyl-D-glutamyl-meso-2,6-diaminopimeloyl-D-alanyl-D-alanine + UDP + H(+). It participates in cell wall biogenesis; peptidoglycan biosynthesis. Functionally, cell wall formation. Catalyzes the transfer of a GlcNAc subunit on undecaprenyl-pyrophosphoryl-MurNAc-pentapeptide (lipid intermediate I) to form undecaprenyl-pyrophosphoryl-MurNAc-(pentapeptide)GlcNAc (lipid intermediate II). The sequence is that of UDP-N-acetylglucosamine--N-acetylmuramyl-(pentapeptide) pyrophosphoryl-undecaprenol N-acetylglucosamine transferase from Xylella fastidiosa (strain Temecula1 / ATCC 700964).